Consider the following 342-residue polypeptide: N-acetyl-gamma-glutamyl-phosphate reductase (342 aa).

C149 is a catalytic residue.

Belongs to the NAGSA dehydrogenase family. Type 1 subfamily.

It is found in the cytoplasm. The catalysed reaction is N-acetyl-L-glutamate 5-semialdehyde + phosphate + NADP(+) = N-acetyl-L-glutamyl 5-phosphate + NADPH + H(+). It functions in the pathway amino-acid biosynthesis; L-arginine biosynthesis; N(2)-acetyl-L-ornithine from L-glutamate: step 3/4. Catalyzes the NADPH-dependent reduction of N-acetyl-5-glutamyl phosphate to yield N-acetyl-L-glutamate 5-semialdehyde. The sequence is that of N-acetyl-gamma-glutamyl-phosphate reductase from Ruegeria pomeroyi (strain ATCC 700808 / DSM 15171 / DSS-3) (Silicibacter pomeroyi).